The sequence spans 181 residues: ATP synthase subunit delta (181 aa).

Belongs to the ATPase delta chain family. As to quaternary structure, F-type ATPases have 2 components, F(1) - the catalytic core - and F(0) - the membrane proton channel. F(1) has five subunits: alpha(3), beta(3), gamma(1), delta(1), epsilon(1). F(0) has three main subunits: a(1), b(2) and c(10-14). The alpha and beta chains form an alternating ring which encloses part of the gamma chain. F(1) is attached to F(0) by a central stalk formed by the gamma and epsilon chains, while a peripheral stalk is formed by the delta and b chains.

The protein resides in the cell membrane. Functionally, f(1)F(0) ATP synthase produces ATP from ADP in the presence of a proton or sodium gradient. F-type ATPases consist of two structural domains, F(1) containing the extramembraneous catalytic core and F(0) containing the membrane proton channel, linked together by a central stalk and a peripheral stalk. During catalysis, ATP synthesis in the catalytic domain of F(1) is coupled via a rotary mechanism of the central stalk subunits to proton translocation. In terms of biological role, this protein is part of the stalk that links CF(0) to CF(1). It either transmits conformational changes from CF(0) to CF(1) or is implicated in proton conduction. In Clostridium kluyveri (strain NBRC 12016), this protein is ATP synthase subunit delta.